The primary structure comprises 100 residues: Protamine-2 (100 aa).

The segment at 1–45 (MVRYHVRSPSERPHREYRQLVNGQEQGRHGQEEQGMSAEGVEGYG) is disordered. Phosphoserine occurs at positions 8, 10, and 37. Positions 8–18 (SPSERPHREYR) are enriched in basic and acidic residues.

The protein belongs to the protamine P2 family. In terms of assembly, interacts with TDRP. Post-translationally, proteolytic processing into mature chains is required for histone eviction during spermatogenesis. Transition proteins (TNP1 and TNP2) are required for processing. As to expression, testis.

It localises to the nucleus. Its subcellular location is the chromosome. Functionally, protamines substitute for histones in the chromatin of sperm during the haploid phase of spermatogenesis. They compact sperm DNA into a highly condensed, stable and inactive complex. The polypeptide is Protamine-2 (PRM2) (Alouatta seniculus (Red howler monkey)).